The primary structure comprises 118 residues: Large ribosomal subunit protein bL19 (118 aa).

Belongs to the bacterial ribosomal protein bL19 family.

In terms of biological role, this protein is located at the 30S-50S ribosomal subunit interface and may play a role in the structure and function of the aminoacyl-tRNA binding site. In Campylobacter curvus (strain 525.92), this protein is Large ribosomal subunit protein bL19.